Reading from the N-terminus, the 1730-residue chain is SH3 and multiple ankyrin repeat domains protein 3 (1730 aa).

Residues 1-75 (MDGPGASAVV…KFLDEERLLQ (75 aa)) are intramolecular interaction with the ANK repeats. Tyrosine 122 carries the phosphotyrosine modification. 6 ANK repeats span residues 148 to 178 (SGECPLSLAAQLDNATDLLKVLRNGGAHLDF), 182 to 211 (DGLTAVHCATRQRNAGALTTLLDLGASPDY), 215 to 245 (RGLTPLYHSALGGGDALCCELLLHDHAQLGT), 249 to 278 (NGWQEIHQACRFGHVQHLEHLLFYGANMGA), 282 to 311 (SGNTALHICALYNQESCARVLLFRGANKDV), and 315 to 345 (NSQTAFQVAIIAGNFELAEVIKTHKDSDVVP). The tract at residues 354–466 (KRRRLAGPSG…PPPRGPKRKL (113 aa)) is disordered. Phosphoserine occurs at positions 373, 375, 387, and 394. Residues 404–415 (LQEEKDRDRDGE) are compositionally biased toward basic and acidic residues. The segment covering 444–460 (APGPGPASPAPPAPPPR) has biased composition (pro residues). An SH3 domain is found at 470 to 529 (VPGRKFIAVKAHSPQGEGEIPLHRGEAVKVLSIGEGGFWEGTVKGRTGWFPADCVEEVQM). Position 482 is a phosphoserine (serine 482). Tyrosine 555 bears the Phosphotyrosine mark. The PDZ domain occupies 570–664 (VAILQKRDHE…RLVMKVVSVT (95 aa)). The tract at residues 664–688 (TRKPEEDGARRRAPPPPKRAPSTTL) is disordered. The required for interaction with ABI1 stretch occupies residues 677 to 684 (PPPPKRAP). Phosphoserine occurs at positions 694, 781, 790, and 801. Disordered regions lie at residues 760-1460 (QGLP…AAGP) and 1475-1524 (GDPV…SLLD). The span at 812–844 (IPPPPQTAPPPPPAPYYFDSGPPPTFSPPPPPG) shows a compositional bias: pro residues. Residues 857–869 (GLEARLGAGAAGL) are compositionally biased toward low complexity. 2 positions are modified to phosphoserine: serine 890 and serine 897. A Phosphothreonine modification is found at threonine 912. Tyrosine 930 bears the Phosphotyrosine mark. Arginine 965 is modified (asymmetric dimethylarginine). Serine 995 carries the phosphoserine modification. Over residues 1016-1026 (VKERRLEERRR) the composition is skewed to basic and acidic residues. The segment covering 1078–1092 (LKPLVGGPSLGPSGS) has biased composition (low complexity). Residues 1122–1131 (SQTPSRSPTP) are compositionally biased toward polar residues. A Phosphothreonine modification is found at threonine 1130. A phosphoserine mark is found at serine 1134, serine 1159, serine 1163, and serine 1166. Over residues 1174–1194 (ARREAEKPPREERKSPEDKKS) the composition is skewed to basic and acidic residues. Threonine 1234 is modified (phosphothreonine). Low complexity predominate over residues 1235–1250 (PELAPAPMQAAAVAEP). 2 stretches are compositionally biased toward pro residues: residues 1251-1261 (MPSPRAQPPGS) and 1321-1333 (TPPPGPGPLPTTV). Serine 1253 is subject to Phosphoserine. Residues 1360 to 1370 (ADTRSSSDPHL) are compositionally biased toward basic and acidic residues. Low complexity predominate over residues 1371 to 1392 (ETTSTISTVSSMSTLSSESGEL). The SH3-binding signature appears at 1410–1416 (PPVPPKP). Serine 1420 bears the Phosphoserine mark. The stretch at 1494-1514 (ISELSSRLQQLNKDTRSLGEE) forms a coiled coil. Polar residues predominate over residues 1495–1505 (SELSSRLQQLN). 4 positions are modified to phosphoserine: serine 1510, serine 1521, serine 1529, and serine 1539. Disordered regions lie at residues 1546–1584 (ISAQRSPGGPGGGASYSVRPSGRYPVARRAPSPVKPASL) and 1627–1663 (VRSVSARSRSPSPSPLPSPSPGSGPSAGPRRPFQQKP). Residues 1627–1637 (VRSVSARSRSP) are compositionally biased toward low complexity. A phosphoserine mark is found at serine 1634, serine 1636, and serine 1638. Residues 1638-1648 (SPSPLPSPSPG) are compositionally biased toward pro residues. A compositionally biased stretch (low complexity) spans 1649–1658 (SGPSAGPRRP). Residues 1667 to 1730 (WSKFDVGDWL…ERALRQLDGS (64 aa)) form the SAM domain.

Belongs to the SHANK family. May homomultimerize via its SAM domain. Interacts with BAIAP2, DBNL and SLC17A7/VGLUT1. Interacts with DLGAP1/GKAP, GRM1/MGLUR1, GRM5/MGLUR5 and LZTS3 C-termini via its PDZ domain. Interacts with ABI1, HOMER1, HOMER2, HOMER3 and CTTN/cortactin SH3 domain. Is part of a complex with DLG4/PSD-95 and DLGAP1/GKAP. Interacts (via PDZ domain) with the GRIA1 subunit of the AMPA receptor (via PDZ-binding motif). Interacts with WASF1 and CYFIP2; the interactions mediate the association of SHANK3 with the WAVE1 complex. Interacts with ARPC2; the interaction probably mediates the association of SHANK3 with the Arp2/3 complex. Interacts (via ANK repeats) with SHARPIN and SPTAN1. Interacts (via PDZ domain) with ARHGAP44 (probably via PDZ-binding motif); the interaction takes place in dendritic spines and promotes GRIA1 exocytosis. Interacts with CAMK2A. Interacts with DIP2A. Interacts with ADGRL3. As to expression, in brain, highly expressed in striatum, thalamus, hippocampus and granule cells of the cerebellum.

It is found in the cytoplasm. The protein localises to the synapse. It localises to the postsynaptic density. The protein resides in the cell projection. Its subcellular location is the dendritic spine. Its function is as follows. Major scaffold postsynaptic density protein which interacts with multiple proteins and complexes to orchestrate the dendritic spine and synapse formation, maturation and maintenance. Interconnects receptors of the postsynaptic membrane including NMDA-type and metabotropic glutamate receptors via complexes with GKAP/PSD-95 and HOMER, respectively, and the actin-based cytoskeleton. Plays a role in the structural and functional organization of the dendritic spine and synaptic junction through the interaction with Arp2/3 and WAVE1 complex as well as the promotion of the F-actin clusters. By way of this control of actin dynamics, participates in the regulation of developing neurons growth cone motility and the NMDA receptor-signaling. Also modulates GRIA1 exocytosis and GRM5/MGLUR5 expression and signaling to control the AMPA and metabotropic glutamate receptor-mediated synaptic transmission and plasticity. May be required at an early stage of synapse formation and be inhibited by IGF1 to promote synapse maturation. This chain is SH3 and multiple ankyrin repeat domains protein 3 (Shank3), found in Mus musculus (Mouse).